We begin with the raw amino-acid sequence, 316 residues long: Pantothenate kinase (316 aa).

Residue Gly-95–Ser-102 participates in ATP binding.

Belongs to the prokaryotic pantothenate kinase family.

The protein localises to the cytoplasm. The enzyme catalyses (R)-pantothenate + ATP = (R)-4'-phosphopantothenate + ADP + H(+). It functions in the pathway cofactor biosynthesis; coenzyme A biosynthesis; CoA from (R)-pantothenate: step 1/5. This is Pantothenate kinase from Hamiltonella defensa subsp. Acyrthosiphon pisum (strain 5AT).